Consider the following 516-residue polypeptide: Membrane-bound transcription factor site-2 protease (516 aa).

At 1-3 the chain is on the cytoplasmic side; that stretch reads MIP. A helical membrane pass occupies residues 4–24; it reads VSLVVVVVGGWTAVYLTDLVL. At 25–74 the chain is on the lumenal side; the sequence is KSSVYFKHSYEDWLENNGLSISPFHIRWQTAVFNRAFYSWGRRKARMLYQ. 2 consecutive transmembrane segments (helical) span residues 75 to 95 and 96 to 107; these read WFNFGMVFGVIAMFSSFFLLG and KTLIQTLGQMMA. Topologically, residues 108 to 141 are lumenal; sequence DSSYSSSSSSSSHSSSSSSSSSSSSSLYNEQVLQ. Residues 142–166 form a helical membrane-spanning segment; it reads VVVPGINLPVNQLTYFFAAVLISGV. H168 serves as a coordination point for Zn(2+). The active site involves E169. The next 3 helical transmembrane spans lie at 171-183, 184-206, and 226-248; these read GHGIAAIREQVRF, NGFGIFLFIIYPGAFVDLFTTHL, and FILALLGILALILLPVILLPFYY. Residue H172 coordinates Zn(2+). Over 249–443 the chain is Lumenal; sequence TGVGVLITEV…LPVVVETFVK (195 aa). An N-linked (GlcNAc...) asparagine glycan is attached at N334. 2 helical membrane passes run 444–461 and 462–473; these read YLISLSGALAIVNAVPCF and ALDGQWILNSFL. The Lumenal portion of the chain corresponds to 474–489; it reads DATLTSVIGDNDVKDL. The helical transmembrane segment at 490–510 threads the bilayer; sequence IGFFILLGGSILLAANVALGL. The Cytoplasmic portion of the chain corresponds to 511–516; it reads WMVTAR.

Belongs to the peptidase M50A family. The cofactor is Zn(2+).

The protein resides in the membrane. Its subcellular location is the cytoplasm. It localises to the golgi apparatus membrane. It catalyses the reaction Cleaves several transcription factors that are type-2 transmembrane proteins within membrane-spanning domains. Known substrates include sterol regulatory element-binding protein (SREBP) -1, SREBP-2 and forms of the transcriptional activator ATF6. SREBP-2 is cleaved at the site 477-DRSRILL-|-CVLTFLCLSFNPLTSLLQWGGA-505. The residues Asn-Pro, 11 residues distal to the site of cleavage in the membrane-spanning domain, are important for cleavage by S2P endopeptidase. Replacement of either of these residues does not prevent cleavage, but there is no cleavage if both of these residues are replaced.. Zinc metalloprotease that mediates intramembrane proteolysis of proteins such as ATF6, ATF6B, SREBF1/SREBP1 and SREBF2/SREBP2. Catalyzes the second step in the proteolytic activation of the sterol regulatory element-binding proteins (SREBPs) SREBF1/SREBP1 and SREBF2/SREBP2: cleaves SREBPs within the first transmembrane segment, thereby releasing the N-terminal segment with a portion of the transmembrane segment attached. Mature N-terminal SREBP fragments shuttle to the nucleus and activate gene transcription. Also mediates the second step in the proteolytic activation of the cyclic AMP-dependent transcription factor ATF-6 (ATF6 and ATF6B). Involved in intramembrane proteolysis during bone formation. In astrocytes and osteoblasts, upon DNA damage and ER stress, mediates the second step of the regulated intramembrane proteolytic activation of the transcription factor CREB3L1, leading to the inhibition of cell-cycle progression. In Bos taurus (Bovine), this protein is Membrane-bound transcription factor site-2 protease.